The sequence spans 78 residues: Large ribosomal subunit protein bL28 (78 aa).

A disordered region spans residues 1–21 (MSRVCQLSGKRANNGMAVSHS).

This sequence belongs to the bacterial ribosomal protein bL28 family.

The sequence is that of Large ribosomal subunit protein bL28 from Synechococcus sp. (strain RCC307).